The following is a 256-amino-acid chain: 3-isopropylmalate dehydratase small subunit 2 (256 aa).

The transit peptide at 1 to 59 (MAYSLPTFPQALPCSSTKTSSSLATFRSPFLRFNGSTSLIPSSISITSRGTSSPTIIPR) directs the protein to the chloroplast.

This sequence belongs to the LeuD family. In terms of assembly, heterodimer of the large LEUC/IIL1 subunit and the small LEUD (SSU1, SSU2 or SSU3) subunits. Expressed in vascular bundles of roots, cotyledons and rosette leaves. Expressed in stem vascular bundles which branche off into lateral inflorescences. Expressed in connective tissues in anthers. In young seedlings, expressed in cotyledon epidermal cells and vasculare bundles. In hypocotyls, expressed in parenchyma cells surrounding the vasculature and further peripheral cells. In seedling roots, expressed in cells along the vasculature. In roots of adult plants, expressed in cells closely associated with the stele. In flowering stalks, expressed in parenchyma cells associated with the phloem or the xylem. Expressed in the vasculature of sepals and petals.

Its subcellular location is the plastid. It localises to the chloroplast stroma. It catalyses the reaction (2R,3S)-3-isopropylmalate = (2S)-2-isopropylmalate. The catalysed reaction is a 2-(omega-methylsulfanyl)alkylmalate = a 2-(omega-methylsulfanyl)alkylmaleate + H2O. It carries out the reaction 2-(3-methylsulfanyl)propylmalate = 2-(2-methylsulfanyl)propylmaleate + H2O. The enzyme catalyses a 3-(omega-methylsulfanyl)alkylmalate = a 2-(omega-methylsulfanyl)alkylmaleate + H2O. It catalyses the reaction 2-(2-methylsulfanyl)ethylmalate = 2-(2-methylsulfanyl)ethylmaleate + H2O. The catalysed reaction is 3-(2-methylsulfanyl)ethylmalate = 2-(2-methylsulfanyl)ethylmaleate + H2O. It carries out the reaction 3-(3-methylsulfanyl)propylmalate = 2-(2-methylsulfanyl)propylmaleate + H2O. It functions in the pathway amino-acid biosynthesis; L-leucine biosynthesis; L-leucine from 3-methyl-2-oxobutanoate: step 2/4. Catalyzes the isomerization between 2-isopropylmalate and 3-isopropylmalate, via the formation of 2-isopropylmaleate. Functions redundantly with LEUD2 in the methionine chain elongation pathway of aliphatic glucosinolate formation. The protein is 3-isopropylmalate dehydratase small subunit 2 of Arabidopsis thaliana (Mouse-ear cress).